We begin with the raw amino-acid sequence, 263 residues long: uncharacterized protein (263 aa).

7 helical membrane passes run 1–21, 38–58, 82–102, 118–138, 151–171, 196–216, and 230–250; these read MLVI…ILCQ, LFLL…HYCY, IPIS…CMMV, GISI…IFTY, GKFG…ANLL, FALI…VIPT, and FWVK…VQYV.

The protein localises to the membrane. This is an uncharacterized protein from Saccharomyces cerevisiae (strain ATCC 204508 / S288c) (Baker's yeast).